A 513-amino-acid polypeptide reads, in one-letter code: Maturase K (513 aa).

It belongs to the intron maturase 2 family. MatK subfamily.

It is found in the plastid. The protein localises to the chloroplast. In terms of biological role, usually encoded in the trnK tRNA gene intron. Probably assists in splicing its own and other chloroplast group II introns. The protein is Maturase K of Astrebla lappacea (Curly Mitchell grass).